The following is a 105-amino-acid chain: Urease subunit beta (105 aa).

It belongs to the urease beta subunit family. In terms of assembly, heterotrimer of UreA (gamma), UreB (beta) and UreC (alpha) subunits. Three heterotrimers associate to form the active enzyme.

It is found in the cytoplasm. It carries out the reaction urea + 2 H2O + H(+) = hydrogencarbonate + 2 NH4(+). It functions in the pathway nitrogen metabolism; urea degradation; CO(2) and NH(3) from urea (urease route): step 1/1. In Prochlorococcus marinus (strain MIT 9313), this protein is Urease subunit beta.